A 422-amino-acid chain; its full sequence is Protein MANNAN SYNTHESIS-RELATED 1 (422 aa).

At 1 to 6 the chain is on the cytoplasmic side; that stretch reads MGVDLR. The chain crosses the membrane as a helical; Signal-anchor for type II membrane protein span at residues 7 to 26; that stretch reads QVVAGILTITMFVMLGQMLH. Residues 27-422 are Lumenal-facing; it reads RDYFDSLQEK…KNHLAYSCFC (396 aa). 263–265 is a substrate binding site; it reads DLR.

This sequence belongs to the glycosyltransferase GT106 family. As to expression, widely expressed.

The protein resides in the golgi apparatus membrane. It functions in the pathway glycan biosynthesis. Functionally, glycosyltransferase involved in mannan biosynthesis. The sequence is that of Protein MANNAN SYNTHESIS-RELATED 1 from Arabidopsis thaliana (Mouse-ear cress).